The following is a 241-amino-acid chain: tRNA pseudouridine synthase A (241 aa).

The Nucleophile role is filled by D51. Y110 contacts substrate.

This sequence belongs to the tRNA pseudouridine synthase TruA family. As to quaternary structure, homodimer.

The enzyme catalyses uridine(38/39/40) in tRNA = pseudouridine(38/39/40) in tRNA. Functionally, formation of pseudouridine at positions 38, 39 and 40 in the anticodon stem and loop of transfer RNAs. The chain is tRNA pseudouridine synthase A from Campylobacter jejuni subsp. doylei (strain ATCC BAA-1458 / RM4099 / 269.97).